A 365-amino-acid polypeptide reads, in one-letter code: Validamycin A dioxygenase (365 aa).

The 111-residue stretch at 174-284 folds into the Fe2OG dioxygenase domain; that stretch reads HATWTQSVNW…LVSLVYFFDA (111 aa). Residues histidine 203, aspartate 205, and histidine 261 each contribute to the Fe cation site. The segment at 331-365 is disordered; it reads GELSLSRPGSADSPGSSPADDHPSRPGRHPAQGPQ. Positions 336–348 are enriched in low complexity; it reads SRPGSADSPGSSP.

This sequence belongs to the iron/ascorbate-dependent oxidoreductase family. The cofactor is Fe(2+).

The catalysed reaction is validamycin A + 2-oxoglutarate + O2 = validamycin B + succinate + CO2 + H(+). It carries out the reaction validoxylamine A + 2-oxoglutarate + O2 = validoxylamine B + succinate + CO2 + H(+). The protein operates within antibiotic biosynthesis. Its function is as follows. Involved in the biosynthesis of validamycin B, a component of the antifungal and antibiotic validamycin complex used as a crop protectant. Catalyzes the regioselective hydroxylation of validamycin A (4-O-beta-D-glucopyranosyl-validoxylamine A) at the C-6 position to yield validamycin B. To a lesser extent, also able to convert validoxylamine A to its hydroxylated derivative. This chain is Validamycin A dioxygenase, found in Streptomyces hygroscopicus subsp. limoneus.